A 39-amino-acid polypeptide reads, in one-letter code: Cytochrome b6-f complex subunit 5 (39 aa).

A helical membrane pass occupies residues 5–25 (LLCGIVLGLVPITIVGLFVSA).

The protein belongs to the PetG family. The 4 large subunits of the cytochrome b6-f complex are cytochrome b6, subunit IV (17 kDa polypeptide, PetD), cytochrome f and the Rieske protein, while the 4 small subunits are PetG, PetL, PetM and PetN. The complex functions as a dimer.

The protein localises to the cellular thylakoid membrane. Functionally, component of the cytochrome b6-f complex, which mediates electron transfer between photosystem II (PSII) and photosystem I (PSI), cyclic electron flow around PSI, and state transitions. PetG is required for either the stability or assembly of the cytochrome b6-f complex. The chain is Cytochrome b6-f complex subunit 5 from Prochlorococcus marinus (strain MIT 9211).